The following is a 1182-amino-acid chain: Intraflagellar transport protein 122 homolog (1182 aa).

WD repeat units lie at residues 10–50 (KAEQ…QPLK), 51–91 (GHKD…LKYT), 93–129 (NDSI…VSKH), 131–169 (SSSK…KVKI), 174–217 (GSLS…IGKD), 219–258 (PLNF…LGTV), 260–300 (EQNS…HGLY), and 453–492 (KQAT…LLFQ).

Component of the IFT complex A (IFT-A) complex. IFT-A complex is divided into a core subcomplex composed of IFT122:IFT140:WDR19 which is associated with TULP3 and a peripheral subcomplex composed of IFT43:WDR35:TTC21B. Interacts with IFT43:WDR35; the interaction connects the 2 IFT-A subcomplexes. Interacts with IFTAP; the interaction associates IFTAP with IFT-A complex.

It is found in the cell projection. It localises to the cilium. Its subcellular location is the cytoplasm. The protein localises to the cytoskeleton. The protein resides in the cilium basal body. Its function is as follows. As a component of the IFT complex A (IFT-A), a complex required for retrograde ciliary transport and entry into cilia of G protein-coupled receptors (GPCRs), it is required in ciliogenesis and ciliary protein trafficking. Involved in cilia formation during neuronal patterning. Acts as a negative regulator of Shh signaling. Required to recruit TULP3 to primary cilia. The polypeptide is Intraflagellar transport protein 122 homolog (Mus musculus (Mouse)).